We begin with the raw amino-acid sequence, 92 residues long: Phosphoribosyl-ATP pyrophosphatase (92 aa).

It belongs to the PRA-PH family.

The protein resides in the cytoplasm. The enzyme catalyses 1-(5-phospho-beta-D-ribosyl)-ATP + H2O = 1-(5-phospho-beta-D-ribosyl)-5'-AMP + diphosphate + H(+). Its pathway is amino-acid biosynthesis; L-histidine biosynthesis; L-histidine from 5-phospho-alpha-D-ribose 1-diphosphate: step 2/9. The chain is Phosphoribosyl-ATP pyrophosphatase from Leptospira borgpetersenii serovar Hardjo-bovis (strain JB197).